Consider the following 233-residue polypeptide: MSKLILIRHGQSLWNAANKFTGWVDIPLSRRGRAEAMIAASKLQEQGYRIDVCFTSLLIRAMETAIIALTEYEQLCGGKTPIFKHDADDLDWHGWDKYDGDPKEELPIFPSQALDERYYGDLQGLNKAQTAQKYGSEQVHEWRRSYFTRPPGGESLEDTQKRVIPYFENRILTHIAHGDTVMVAAHGNSLRAMIMRLENLQPEDVPNLELATGIPLIYEVDQQAKVSNKIVLH.

Residues 8 to 15 (RHGQSLWN), 21 to 22 (TG), R60, 116 to 119 (ERYY), K127, 143 to 144 (RR), and 187 to 188 (GN) contribute to the substrate site. H9 serves as the catalytic Tele-phosphohistidine intermediate. E116 serves as the catalytic Proton donor/acceptor.

It belongs to the phosphoglycerate mutase family. BPG-dependent PGAM subfamily.

The enzyme catalyses (2R)-2-phosphoglycerate = (2R)-3-phosphoglycerate. It functions in the pathway carbohydrate degradation; glycolysis; pyruvate from D-glyceraldehyde 3-phosphate: step 3/5. Its function is as follows. Catalyzes the interconversion of 2-phosphoglycerate and 3-phosphoglycerate. This Gloeothece citriformis (strain PCC 7424) (Cyanothece sp. (strain PCC 7424)) protein is 2,3-bisphosphoglycerate-dependent phosphoglycerate mutase.